Here is a 201-residue protein sequence, read N- to C-terminus: Orotate phosphoribosyltransferase (201 aa).

Residue E113 to S121 coordinates 5-phospho-alpha-D-ribose 1-diphosphate. Orotate-binding residues include T117 and R145.

This sequence belongs to the purine/pyrimidine phosphoribosyltransferase family. PyrE subfamily. As to quaternary structure, homodimer. Mg(2+) is required as a cofactor.

The enzyme catalyses orotidine 5'-phosphate + diphosphate = orotate + 5-phospho-alpha-D-ribose 1-diphosphate. Its pathway is pyrimidine metabolism; UMP biosynthesis via de novo pathway; UMP from orotate: step 1/2. In terms of biological role, catalyzes the transfer of a ribosyl phosphate group from 5-phosphoribose 1-diphosphate to orotate, leading to the formation of orotidine monophosphate (OMP). The chain is Orotate phosphoribosyltransferase from Helicobacter pylori (strain ATCC 700392 / 26695) (Campylobacter pylori).